Consider the following 288-residue polypeptide: Carbon monoxide dehydrogenase medium chain (288 aa).

One can recognise an FAD-binding PCMH-type domain in the interval 1–177 (MIPGSFDYHR…TAIRIPVPPT (177 aa)). FAD is bound by residues 32-36 (AGGHS) and 111-115 (TIGGN).

Dimer of heterotrimers. Each heterotrimer consists of a large, a medium and a small subunit. Requires FAD as cofactor.

It catalyses the reaction CO + a quinone + H2O = a quinol + CO2. Its function is as follows. Catalyzes the oxidation of carbon monoxide to carbon dioxide. The sequence is that of Carbon monoxide dehydrogenase medium chain (coxM) from Afipia carboxidovorans (strain ATCC 49405 / DSM 1227 / KCTC 32145 / OM5) (Oligotropha carboxidovorans).